The primary structure comprises 1151 residues: Sterol regulatory element-binding protein 1 (1151 aa).

The interval 1 to 59 is transcriptional activation (acidic); it reads MDEPPFTEAALEQALAEPCELDAALLTDIEDMLQLINNQDSDFPGLFDAPYAGVAGGTD. Residues 1–487 are Cytoplasmic-facing; it reads MDEPPFTEAA…HGRGMLDRSR (487 aa). Positions 27 to 35 match the 9aaTAD motif; that stretch reads TDIEDMLQL. Disordered regions lie at residues 39 to 125 and 164 to 184; these read QDSD…IKEE and GYPSPPGSFSSATPPGSTSQT. Low complexity predominate over residues 57–69; it reads GTDPTSPDASSPG. Residues 91-105 are compositionally biased toward pro residues; sequence TPPPPPVSPTQPAPT. Residues Ser-98 and Ser-117 each carry the phosphoserine modification. Positions 170–184 are enriched in polar residues; sequence GSFSSATPPGSTSQT. The interval 234 to 497 is interaction with LMNA; the sequence is QQVPVLLQPH…LALCVLVFLC (264 aa). Residues 324–374 form the bHLH domain; that stretch reads EKRTAHNAIEKRYRSSINDKIIELKDLVVGTEAKLNKSAVLRKAIDYIRFL. Ser-338 and Ser-339 each carry phosphoserine; by SIK1. The segment at 374 to 396 is leucine-zipper; the sequence is LQQSNQKLKQENLSLRTAAHKSK. Ser-397 bears the Phosphoserine; by AMPK mark. The disordered stretch occupies residues 399 to 479; that stretch reads KDLVSCSSGG…KPEQLPAPHG (81 aa). Ser-403 is subject to Phosphoserine; by SIK1. Over residues 431–448 the composition is skewed to low complexity; the sequence is DAGSPSQSSPLSLGSRGS. A Phosphoserine modification is found at Ser-457. The chain crosses the membrane as a helical span at residues 488–508; that stretch reads LALCVLVFLCLSCNPLASLMG. The Lumenal segment spans residues 509-547; it reads SWALPGPSDATSAYHGPWRSVLGAEGRDGPGWVLWLLPP. A helical membrane pass occupies residues 548-568; the sequence is LVWLTNGLLVLLFLALLFVYG. Over 569–1151 the chain is Cytoplasmic; sequence EPVTRPHSDP…LGGGTTVTSS (583 aa). Positions 987–1006 are disordered; that stretch reads RQKPPPPSQASQGSSSGAQA. The span at 995-1006 shows a compositional bias: low complexity; sequence QASQGSSSGAQA. Residue Ser-1060 is modified to Phosphoserine.

Belongs to the SREBP family. As to quaternary structure, efficient DNA binding of the soluble transcription factor fragment requires dimerization with another bHLH protein. Interacts with CEBPA, the interaction produces a transcriptional synergy. Interacts with LMNA. In terms of assembly, forms a tight complex with SCAP, the SCAP-SREBP complex, in the endoplasmic reticulum membrane and the Golgi apparatus. Interacts with PAQR3; the interaction anchors the SCAP-SREBP complex to the Golgi apparatus in low cholesterol conditions. Processed in the Golgi apparatus, releasing the protein from the membrane. At low cholesterol the SCAP-SREBP complex is recruited into COPII vesicles for export from the endoplasmic reticulum. In the Golgi, complex SREBPs are cleaved sequentially by site-1 (MBTPS1, S1P) and site-2 (MBTPS2, S2P) proteases. The first cleavage by site-1 protease occurs within the luminal loop, the second cleavage by site-2 protease occurs within the first transmembrane domain, releasing the transcription factor from the Golgi membrane. Post-translationally, phosphorylated by AMPK, leading to suppress protein processing and nuclear translocation, and repress target gene expression. Phosphorylation at Ser-403 by SIK1 represses activity possibly by inhibiting DNA-binding. In terms of processing, SCAP-free SREBF1 is ubiquitinated by the BCR(ARMC5) complex, leading to its degradation. Ubiquitinated; the nuclear form has a rapid turnover and is rapidly ubiquitinated and degraded by the proteasome in the nucleus.

The protein localises to the endoplasmic reticulum membrane. It is found in the golgi apparatus membrane. The protein resides in the cytoplasmic vesicle. Its subcellular location is the COPII-coated vesicle membrane. It localises to the nucleus. Its activity is regulated as follows. Activation by cleavage is down-regulated upon activation of SIRT3-dependent PRKAA1/AMPK-alpha signaling cascade which leads to inhibition of ATP-consuming lipogenesis to restore cellular energy balance. Its function is as follows. Precursor of the transcription factor form (Processed sterol regulatory element-binding protein 1), which is embedded in the endoplasmic reticulum membrane. Low sterol concentrations promote processing of this form, releasing the transcription factor form that translocates into the nucleus and activates transcription of genes involved in cholesterol biosynthesis and lipid homeostasis. Key transcription factor that regulates expression of genes involved in cholesterol biosynthesis and lipid homeostasis. Binds to the sterol regulatory element 1 (SRE-1) (5'-ATCACCCCAC-3'). Has dual sequence specificity binding to both an E-box motif (5'-ATCACGTGA-3') and to SRE-1 (5'-ATCACCCCAC-3'). Regulates the promoters of genes involved in cholesterol biosynthesis and the LDL receptor (LDLR) pathway of sterol regulation. The chain is Sterol regulatory element-binding protein 1 (SREBF1) from Sus scrofa (Pig).